The primary structure comprises 225 residues: ATP-dependent dethiobiotin synthetase BioD (225 aa).

12-17 (EIGKTY) contributes to the ATP binding site. T16 is a Mg(2+) binding site. The active site involves K37. S41 is a binding site for substrate. Residues D55, 122-125 (EGVG), and 182-183 (SE) contribute to the ATP site. Positions 55 and 122 each coordinate Mg(2+).

The protein belongs to the dethiobiotin synthetase family. In terms of assembly, homodimer. Requires Mg(2+) as cofactor.

It is found in the cytoplasm. It catalyses the reaction (7R,8S)-7,8-diammoniononanoate + CO2 + ATP = (4R,5S)-dethiobiotin + ADP + phosphate + 3 H(+). It functions in the pathway cofactor biosynthesis; biotin biosynthesis; biotin from 7,8-diaminononanoate: step 1/2. Its function is as follows. Catalyzes a mechanistically unusual reaction, the ATP-dependent insertion of CO2 between the N7 and N8 nitrogen atoms of 7,8-diaminopelargonic acid (DAPA, also called 7,8-diammoniononanoate) to form a ureido ring. This is ATP-dependent dethiobiotin synthetase BioD from Methylobacterium nodulans (strain LMG 21967 / CNCM I-2342 / ORS 2060).